A 497-amino-acid chain; its full sequence is MKSSTMSPMYAAIDLGSNSFHMLVVRHINGSVQTMAKIKRKVRLAAGLNENNTLSHEAMQRGWDCLSLFAERLQDIPVENIRIVGTATLRVASNVDIFLEKANQILGHNINVIEGEEEARMIYQGVAHTSGGNGRRLVVDIGGASTELIIGEGFEAQALTSLKMGCVTWLEGYFKDRALTQKNFNAAIAGAKETLAPILQQYTDLGWQTCVGASGTVQALQEIMLAQGMDEVITLAKLKRLQKQAMQYEHLEELDIDGLTLERALVFPSGLSILIAIFELLNIDSMTLAGGALREGLCYGMIDELQHDEVCQRTIKSTQQRYQLDVDYAQQVTDLSIQLVQQCGNDWLIEPQALPLLTAATQLHEIGMCIDYKKGGEHSAYLINALDLPGFTRAQKHLLGELLRRYREYFSAMPTQHAVSDISAQRMLRILRLAIILTHRRDVNLAPTVTLSEKNDVLSLSIDGAWLAANPLTRSELEIEADKQTNIGWELVIDARD.

The protein belongs to the GppA/Ppx family. GppA subfamily.

It carries out the reaction guanosine 3'-diphosphate 5'-triphosphate + H2O = guanosine 3',5'-bis(diphosphate) + phosphate + H(+). Its pathway is purine metabolism; ppGpp biosynthesis; ppGpp from GTP: step 2/2. Its function is as follows. Catalyzes the conversion of pppGpp to ppGpp. Guanosine pentaphosphate (pppGpp) is a cytoplasmic signaling molecule which together with ppGpp controls the 'stringent response', an adaptive process that allows bacteria to respond to amino acid starvation, resulting in the coordinated regulation of numerous cellular activities. This Aliivibrio fischeri (strain ATCC 700601 / ES114) (Vibrio fischeri) protein is Guanosine-5'-triphosphate,3'-diphosphate pyrophosphatase.